The sequence spans 418 residues: Glutamyl-tRNA reductase (418 aa).

Residues 49–52, Ser-109, 114–116, and Gln-120 each bind substrate; these read TCNR and EPQ. Residue Cys-50 is the Nucleophile of the active site. 189–194 lines the NADP(+) pocket; sequence GAGETI.

It belongs to the glutamyl-tRNA reductase family. Homodimer.

The catalysed reaction is (S)-4-amino-5-oxopentanoate + tRNA(Glu) + NADP(+) = L-glutamyl-tRNA(Glu) + NADPH + H(+). It participates in porphyrin-containing compound metabolism; protoporphyrin-IX biosynthesis; 5-aminolevulinate from L-glutamyl-tRNA(Glu): step 1/2. In terms of biological role, catalyzes the NADPH-dependent reduction of glutamyl-tRNA(Glu) to glutamate 1-semialdehyde (GSA). The polypeptide is Glutamyl-tRNA reductase (Citrobacter koseri (strain ATCC BAA-895 / CDC 4225-83 / SGSC4696)).